The chain runs to 516 residues: uncharacterized protein (516 aa).

The next 5 membrane-spanning stretches (helical) occupy residues 10-27, 32-54, 64-83, 95-117, and 165-187; these read IRYPELALFLVIAAGYWI, IGAFSLGPVTGALFAGLVVGDFA, SFLFLLFLFGVGYSVGPQFV, LLAVVVCLTGLAAAIAVGRILGL, and AVCYIFGYAGVIMWCTVVAPALL. RCK C-terminal domains are found at residues 208 to 291 and 296 to 376; these read KPGL…SRAE and RELL…NIGV. 4 helical membrane-spanning segments follow: residues 386–408, 412–430, 443–465, and 480–502; these read FVVLGLAIFFGGVVGVLVSFPVG, IALSTSVGTLLAGLLVGHL, GAISLMTSLGLAAFVGLTGIHAG, and LLGGMVVTLLPQIVGFCFGHFVL.

It belongs to the AAE transporter (TC 2.A.81) family.

The protein resides in the cell membrane. This is an uncharacterized protein from Bradyrhizobium diazoefficiens (strain JCM 10833 / BCRC 13528 / IAM 13628 / NBRC 14792 / USDA 110).